The following is a 678-amino-acid chain: Penicillin-binding protein activator LpoA (678 aa).

An N-terminal signal peptide occupies residues 1–26; the sequence is MVPSTFSRLKAARCLPVVLAALIFAG. Cys-27 carries N-palmitoyl cysteine lipidation. Residue Cys-27 is the site of S-diacylglycerol cysteine attachment. Positions 300–310 are enriched in low complexity; that stretch reads AADVAEQPQPQ. Disordered stretches follow at residues 300–340 and 496–528; these read AADV…PVSA and ALTGSPITPRATTDSGMTTNNPTLQTTPTDDQF. A compositionally biased stretch (polar residues) spans 311-327; that stretch reads TADSVASPAQASVSDLT. Composition is skewed to low complexity over residues 330–340 and 513–528; these read QPAAQPVPVSA and TTNNPTLQTTPTDDQF.

The protein belongs to the LpoA family. Interacts with PBP1a.

The protein localises to the cell outer membrane. Functionally, regulator of peptidoglycan synthesis that is essential for the function of penicillin-binding protein 1A (PBP1a). This Shigella flexneri serotype X (strain 2002017) protein is Penicillin-binding protein activator LpoA.